Here is a 203-residue protein sequence, read N- to C-terminus: Phosphatidylglycerophosphatase B (203 aa).

Residue Met1 is a topological domain, cytoplasmic. The chain crosses the membrane as a helical span at residues 2-17 (YKPVSLFLFFLILAAA). Residues 18–55 (IHTNAVQSADEAISKAAVLIRQPWLNEVMTGITHLGAS) are Extracellular-facing. A helical membrane pass occupies residues 56 to 74 (SFLLPLIVIIGAGMFFYRK). The Cytoplasmic segment spans residues 75-78 (TWDG). Residues 79-99 (LLMLLVFGTDRLLNKVLKEWI) traverse the membrane as a helical segment. Positions 96-104 (KEWIERVRP) are phosphatase sequence motif I. The Extracellular portion of the chain corresponds to 100–119 (ERVRPDFAPLVHESSFSFPS). Residues 118–121 (PSGH) form a phosphatase sequence motif II region. A helical transmembrane segment spans residues 120–139 (GHSMNAACVYPVIAYFLVKH). His121 acts as the Proton donors in catalysis. Over 140-146 (LPFLSKH) the chain is Cytoplasmic. The helical transmembrane segment at 147–167 (KKMVYIIAGVIAVLVGISRVY) threads the bilayer. A phosphatase sequence motif III region spans residues 164–175 (SRVYLGVHFVTD). Topologically, residues 168–172 (LGVHF) are extracellular. His171 (nucleophile) is an active-site residue. A helical transmembrane segment spans residues 173-196 (VTDVLGGFSLGLLLFFLVKGFDEK). Residues 197-203 (IKRFRQK) lie on the Cytoplasmic side of the membrane.

The protein belongs to the PA-phosphatase related phosphoesterase family.

The protein localises to the cell membrane. It catalyses the reaction a 1,2-diacyl-sn-glycero-3-phospho-(1'-sn-glycero-3'-phosphate) + H2O = a 1,2-diacyl-sn-glycero-3-phospho-(1'-sn-glycerol) + phosphate. Catalyzes the dephosphorylation of phosphatidylglycerophosphate (PGP) to phosphatidylglycerol. Also has undecaprenyl pyrophosphate phosphatase activity, required for the biosynthesis of the lipid carrier undecaprenyl phosphate. The chain is Phosphatidylglycerophosphatase B from Bacillus subtilis (strain 168).